The primary structure comprises 232 residues: Phosphatidylserine decarboxylase proenzyme (232 aa).

Residue S190 is the Schiff-base intermediate with substrate; via pyruvic acid of the active site. Position 190 is a pyruvic acid (Ser); by autocatalysis (S190).

The protein belongs to the phosphatidylserine decarboxylase family. PSD-A subfamily. As to quaternary structure, heterodimer of a large membrane-associated beta subunit and a small pyruvoyl-containing alpha subunit. The cofactor is pyruvate. In terms of processing, is synthesized initially as an inactive proenzyme. Formation of the active enzyme involves a self-maturation process in which the active site pyruvoyl group is generated from an internal serine residue via an autocatalytic post-translational modification. Two non-identical subunits are generated from the proenzyme in this reaction, and the pyruvate is formed at the N-terminus of the alpha chain, which is derived from the carboxyl end of the proenzyme. The post-translation cleavage follows an unusual pathway, termed non-hydrolytic serinolysis, in which the side chain hydroxyl group of the serine supplies its oxygen atom to form the C-terminus of the beta chain, while the remainder of the serine residue undergoes an oxidative deamination to produce ammonia and the pyruvoyl prosthetic group on the alpha chain.

The protein localises to the cell membrane. It catalyses the reaction a 1,2-diacyl-sn-glycero-3-phospho-L-serine + H(+) = a 1,2-diacyl-sn-glycero-3-phosphoethanolamine + CO2. It participates in phospholipid metabolism; phosphatidylethanolamine biosynthesis; phosphatidylethanolamine from CDP-diacylglycerol: step 2/2. Functionally, catalyzes the formation of phosphatidylethanolamine (PtdEtn) from phosphatidylserine (PtdSer). In Bartonella bacilliformis (strain ATCC 35685 / KC583 / Herrer 020/F12,63), this protein is Phosphatidylserine decarboxylase proenzyme.